Reading from the N-terminus, the 451-residue chain is 1,3-beta-glucanosyltransferase PGA4 (451 aa).

A signal peptide spans 1-18; sequence MLFRSLVTYLSLVSSVLS. Tyr-81 contacts (1,3-beta-D-glucosyl)n. Residue Asn-88 is glycosylated (N-linked (GlcNAc...) asparagine). Residues 108–116, Asn-151, Glu-152, and Arg-198 contribute to the (1,3-beta-D-glucosyl)n site; that span reads NTPHSSITR. The active-site Proton donor is the Glu-152. Asn-245 carries an N-linked (GlcNAc...) asparagine glycan. Glu-254 serves as the catalytic Nucleophile. Tyr-286 is a binding site for (1,3-beta-D-glucosyl)n. The disordered stretch occupies residues 316 to 336; it reads SQFEKTKNPSGDGGYLKSTGG. Residues Asn-347, Asn-394, and Asn-422 are each glycosylated (N-linked (GlcNAc...) asparagine). Residues 395-427 form a disordered region; that stretch reads YTSSITASSRASPSQTSQVSSSSATSANSTSSK. The span at 396-426 shows a compositional bias: low complexity; it reads TSSITASSRASPSQTSQVSSSSATSANSTSS. Asp-430 carries GPI-anchor amidated aspartate lipidation. A propeptide spans 431–451 (removed in mature form); that stretch reads AAVEGAGFLSVIALAAGIALL.

This sequence belongs to the glycosyl hydrolase 72 family. The GPI-anchor is attached to the protein in the endoplasmic reticulum and serves to target the protein to the cell surface. There, the glucosamine-inositol phospholipid moiety is cleaved off and the GPI-modified mannoprotein is covalently attached via its lipidless GPI glycan remnant to the 1,6-beta-glucan of the outer cell wall layer.

The protein resides in the secreted. Its subcellular location is the cell wall. The protein localises to the membrane. In terms of biological role, splits internally a 1,3-beta-glucan molecule and transfers the newly generated reducing end (the donor) to the non-reducing end of another 1,3-beta-glucan molecule (the acceptor) forming a 1,3-beta linkage, resulting in the elongation of 1,3-beta-glucan chains in the cell wall. Involved in cell wall biosynthesis and morphogenesis. Plays a key role in virulence. In Candida albicans (strain SC5314 / ATCC MYA-2876) (Yeast), this protein is 1,3-beta-glucanosyltransferase PGA4 (PGA4).